A 182-amino-acid chain; its full sequence is MFKYIGDIVKGTGTQLRSLVMVFGHGFRKRDTLQYPEEQVYLPPRYRGRIVLTRDPDGEERCVACNLCAVACPVGCISLQKAETEDGRWYPDFFRINFSRCIFCGLCEEACPTTAIQLTPDFEMAEFKRQDLVYEKEDLLISGPGKNPDYNFYRVAGMAVAGKPKGAAQNEAEPINVKSLLP.

2 4Fe-4S ferredoxin-type domains span residues 52–82 (LTRD…LQKA) and 92–121 (DFFR…LTPD). The [4Fe-4S] cluster site is built by C62, C65, C68, C72, C101, C104, C107, and C111.

It belongs to the complex I 23 kDa subunit family. In terms of assembly, NDH-1 is composed of 13 different subunits. Subunits NuoA, H, J, K, L, M, N constitute the membrane sector of the complex. [4Fe-4S] cluster serves as cofactor.

It is found in the cell inner membrane. It catalyses the reaction a quinone + NADH + 5 H(+)(in) = a quinol + NAD(+) + 4 H(+)(out). In terms of biological role, NDH-1 shuttles electrons from NADH, via FMN and iron-sulfur (Fe-S) centers, to quinones in the respiratory chain. The immediate electron acceptor for the enzyme in this species is believed to be ubiquinone. Couples the redox reaction to proton translocation (for every two electrons transferred, four hydrogen ions are translocated across the cytoplasmic membrane), and thus conserves the redox energy in a proton gradient. The polypeptide is NADH-quinone oxidoreductase subunit I (Pseudomonas fluorescens (strain Pf0-1)).